A 485-amino-acid polypeptide reads, in one-letter code: MLLTQLHCPYLLLLLVVLSCLPKAPSAQVMDFLFEKWKLYSDQCHHNLSLLPPPTELVCNRTFDKYSCWPDTPPNTTANISCPWYLPWYHKVQHRLVFKRCGPDGQWVRGPRGQSWRDASQCQMDDDEIEVQKGVAKMYSSYQVMYTVGYSLSLGALLLALVILLGLRKLHCTRNYIHGNLFASFVLKAGSVLVIDWLLKTRYSQKIGDDLSVSVWLSDGAVAGCRVATVIMQYGIIANYCWLLVEGVYLYSLLSITTFSEKSFFSLYLCIGWGSPLLFVIPWVVVKCLFENVQCWTSNDNMGFWWILRIPVLLAILINFFIFVRIIHLLVAKLRAHQMHYADYKFRLARSTLTLIPLLGVHEVVFAFVTDEHAQGTLRSTKLFFDLFFSSFQGLLVAVLYCFLNKEVQAELLRRWRRWQEGKALQEERMASSHGSHMAPAGTCHGDPCEKLQLMSAGSSSGTGCEPSAKTSLASSLPRLADSPT.

Positions 1–26 are cleaved as a signal peptide; it reads MLLTQLHCPYLLLLLVVLSCLPKAPS. Over 27–137 the chain is Extracellular; that stretch reads AQVMDFLFEK…EIEVQKGVAK (111 aa). Intrachain disulfides connect C44–C68, C59–C101, and C82–C122. N-linked (GlcNAc...) asparagine glycans are attached at residues N47, N60, N75, and N79. The chain crosses the membrane as a helical span at residues 138 to 162; sequence MYSSYQVMYTVGYSLSLGALLLALV. Residues 163–174 are Cytoplasmic-facing; it reads ILLGLRKLHCTR. A helical transmembrane segment spans residues 175–199; it reads NYIHGNLFASFVLKAGSVLVIDWLL. Residues 200–226 lie on the Extracellular side of the membrane; the sequence is KTRYSQKIGDDLSVSVWLSDGAVAGCR. C225 and C295 form a disulfide bridge. A helical membrane pass occupies residues 227 to 250; the sequence is VATVIMQYGIIANYCWLLVEGVYL. Over 251-264 the chain is Cytoplasmic; sequence YSLLSITTFSEKSF. A helical transmembrane segment spans residues 265-286; sequence FSLYLCIGWGSPLLFVIPWVVV. At 287 to 304 the chain is on the extracellular side; the sequence is KCLFENVQCWTSNDNMGF. The chain crosses the membrane as a helical span at residues 305–327; sequence WWILRIPVLLAILINFFIFVRII. The Cytoplasmic portion of the chain corresponds to 328–351; the sequence is HLLVAKLRAHQMHYADYKFRLARS. Positions 351–354 are important for allosteric inhibitor binding; it reads STLT. A helical transmembrane segment spans residues 352-370; sequence TLTLIPLLGVHEVVFAFVT. The Extracellular segment spans residues 371–382; it reads DEHAQGTLRSTK. The chain crosses the membrane as a helical span at residues 383–403; the sequence is LFFDLFFSSFQGLLVAVLYCF. At 404–485 the chain is on the cytoplasmic side; that stretch reads LNKEVQAELL…SLPRLADSPT (82 aa). A disordered region spans residues 455–485; it reads MSAGSSSGTGCEPSAKTSLASSLPRLADSPT. Over residues 456-475 the composition is skewed to polar residues; that stretch reads SAGSSSGTGCEPSAKTSLAS. A phosphoserine mark is found at S460 and S476.

This sequence belongs to the G-protein coupled receptor 2 family. In terms of processing, ligand-binding promotes phosphorylation of serine residues in the C-terminal cytoplasmic domain. Phosphorylation is important for receptor endocytosis after ligand-binding.

The protein localises to the cell membrane. Functionally, G-protein coupled receptor for glucagon that plays a central role in the regulation of blood glucose levels and glucose homeostasis. Regulates the rate of hepatic glucose production by promoting glycogen hydrolysis and gluconeogenesis. Plays an important role in mediating the responses to fasting. Ligand binding causes a conformation change that triggers signaling via guanine nucleotide-binding proteins (G proteins) and modulates the activity of down-stream effectors, such as adenylate cyclase. Promotes activation of adenylate cyclase. Besides, plays a role in signaling via a phosphatidylinositol-calcium second messenger system. This chain is Glucagon receptor (Gcgr), found in Rattus norvegicus (Rat).